Here is a 537-residue protein sequence, read N- to C-terminus: 4-coumarate--CoA ligase (537 aa).

Residues serine 189, serine 190, glycine 191, threonine 192, threonine 193, and lysine 197 each contribute to the ATP site. 2 residues coordinate (E)-4-coumaroyl-AMP: tyrosine 239 and serine 243. Lysine 260 serves as a coordination point for CoA. Residues 262 to 331 (NLTTCLELIQ…ERFPKAIFGQ (70 aa)) form an SBD1 region. Residues alanine 309, glutamine 331, glycine 332, threonine 336, and methionine 344 each contribute to the (E)-4-coumaroyl-AMP site. 3 residues coordinate ATP: glutamine 331, glycine 332, and threonine 336. The interval 332 to 399 (GYGMTEAGPV…IRGPEIMKGY (68 aa)) is SBD2. Aspartate 420 and arginine 435 together coordinate ATP. The (E)-4-coumaroyl-AMP site is built by lysine 437 and lysine 441. Residues lysine 443 and glycine 444 each coordinate CoA. ATP is bound at residue lysine 524.

This sequence belongs to the ATP-dependent AMP-binding enzyme family. Mg(2+) is required as a cofactor.

It carries out the reaction (E)-4-coumarate + ATP + CoA = (E)-4-coumaroyl-CoA + AMP + diphosphate. It catalyses the reaction (E)-4-coumarate + ATP + H(+) = (E)-4-coumaroyl-AMP + diphosphate. The enzyme catalyses (E)-4-coumaroyl-AMP + CoA = (E)-4-coumaroyl-CoA + AMP + H(+). It functions in the pathway phytoalexin biosynthesis; 3,4',5-trihydroxystilbene biosynthesis; 3,4',5-trihydroxystilbene from trans-4-coumarate: step 1/2. Its function is as follows. Carboxylate--CoA ligase that may use 4-coumarate as substrate. Follows a two-step reaction mechanism, wherein the carboxylate substrate first undergoes adenylation by ATP, followed by a thioesterification in the presence of CoA to yield the final CoA thioester. The sequence is that of 4-coumarate--CoA ligase (4CL) from Pinus taeda (Loblolly pine).